The chain runs to 1401 residues: DNA-directed RNA polymerase subunit beta' (1401 aa).

Cys-71, Cys-73, Cys-86, and Cys-89 together coordinate Zn(2+). The Mg(2+) site is built by Asp-462, Asp-464, and Asp-466. The Zn(2+) site is built by Cys-810, Cys-884, Cys-891, and Cys-894. The tract at residues 1378-1401 (EKQATIVPSAPEPEPLALPTPEQS) is disordered.

It belongs to the RNA polymerase beta' chain family. In terms of assembly, the RNAP catalytic core consists of 2 alpha, 1 beta, 1 beta' and 1 omega subunit. When a sigma factor is associated with the core the holoenzyme is formed, which can initiate transcription. It depends on Mg(2+) as a cofactor. Requires Zn(2+) as cofactor.

The catalysed reaction is RNA(n) + a ribonucleoside 5'-triphosphate = RNA(n+1) + diphosphate. In terms of biological role, DNA-dependent RNA polymerase catalyzes the transcription of DNA into RNA using the four ribonucleoside triphosphates as substrates. The sequence is that of DNA-directed RNA polymerase subunit beta' from Rhodopseudomonas palustris (strain BisB18).